A 118-amino-acid polypeptide reads, in one-letter code: UPF0342 protein BCE_0953 (118 aa).

Belongs to the UPF0342 family.

The sequence is that of UPF0342 protein BCE_0953 from Bacillus cereus (strain ATCC 10987 / NRS 248).